A 252-amino-acid polypeptide reads, in one-letter code: Type III pantothenate kinase (252 aa).

Asp6 to Glu13 lines the ATP pocket. Substrate-binding positions include Tyr100 and Gly107–Arg110. The active-site Proton acceptor is the Asp109. Asp129 is a K(+) binding site. An ATP-binding site is contributed by Thr132. A substrate-binding site is contributed by Thr184.

This sequence belongs to the type III pantothenate kinase family. In terms of assembly, homodimer. It depends on NH4(+) as a cofactor. Requires K(+) as cofactor.

Its subcellular location is the cytoplasm. The enzyme catalyses (R)-pantothenate + ATP = (R)-4'-phosphopantothenate + ADP + H(+). It functions in the pathway cofactor biosynthesis; coenzyme A biosynthesis; CoA from (R)-pantothenate: step 1/5. In terms of biological role, catalyzes the phosphorylation of pantothenate (Pan), the first step in CoA biosynthesis. In Sulfurihydrogenibium sp. (strain YO3AOP1), this protein is Type III pantothenate kinase.